A 699-amino-acid chain; its full sequence is Cell pattern formation-associated protein StuA (699 aa).

Disordered stretches follow at residues 1–20 and 31–97; these read MDGT…LLAP and TPQF…QPEH. Positions 32 to 49 are enriched in low complexity; the sequence is PQFKSQQSQPQSQSQYPS. Polar residues predominate over residues 52–61; sequence NPDSYSSSSP. Acidic residues predominate over residues 75–84; that stretch reads EDGEDYDQEE. Positions 226 to 332 constitute an HTH APSES-type domain; sequence RVTATLWEDE…HNIGALLYHP (107 aa). Positions 260-281 form a DNA-binding region, H-T-H motif; it reads GTKLLNVAGMTRGRRDGILKSE. Disordered stretches follow at residues 372–594, 599–618, and 674–699; these read AMPT…MNSM, RRDD…DLNN, and PSYP…QSFG. Positions 376–423 are enriched in polar residues; that stretch reads GYTSQQPLTNGHQSMANTPQPLTNGSQPPMNGSQTPMNGPQPPMQNGG. Composition is skewed to basic and acidic residues over residues 428–438 and 478–491; these read RVREDDDDLHR and GLKR…DMHR. The segment covering 520-529 has biased composition (polar residues); that stretch reads NLHQPLSNGD. The segment covering 535-545 has biased composition (basic and acidic residues); that stretch reads RGRDDDDDVHR. Residues 566 to 594 show a composition bias toward polar residues; sequence TSTSNDMLPQSPYYTLSNGAYQGPMMNSM. The tract at residues 669-695 is nuclear localization domain; it reads TVAVSPSYPAGPGYELARPVTNVPRRQ.

This sequence belongs to the EFG1/PHD1/stuA family.

The protein resides in the nucleus. In terms of biological role, transcription factor that regulates asexual reproduction. Binds the StuA-response elements (StRE) with the consensus sequence 5'-(A/T)CGCG(T/A)N(A/C)-3' at the promoters of target genes. Controls the expression of the gene clusters involved in the production of deoxynivalenol (DON) and 15-acetyldeoxynivalenol (15ADON). Regulates the expression of genes involved in chitin and glucan metabolism. Also controls catalase activity and cell surface hydrophobicity. Plays an important role in pathogenicity. The protein is Cell pattern formation-associated protein StuA of Gibberella zeae (strain ATCC MYA-4620 / CBS 123657 / FGSC 9075 / NRRL 31084 / PH-1) (Wheat head blight fungus).